We begin with the raw amino-acid sequence, 208 residues long: dITP/XTP pyrophosphatase (208 aa).

Substrate is bound at residue 15–20; it reads SHNAGK. Mg(2+) is bound by residues Glu47 and Asp76. Catalysis depends on Asp76, which acts as the Proton acceptor. Substrate-binding positions include Ser77, 157 to 160, Lys180, and 185 to 186; these read HGYD and HR.

The protein belongs to the HAM1 NTPase family. In terms of assembly, homodimer. The cofactor is Mg(2+).

It catalyses the reaction XTP + H2O = XMP + diphosphate + H(+). It carries out the reaction dITP + H2O = dIMP + diphosphate + H(+). The enzyme catalyses ITP + H2O = IMP + diphosphate + H(+). Functionally, pyrophosphatase that catalyzes the hydrolysis of nucleoside triphosphates to their monophosphate derivatives, with a high preference for the non-canonical purine nucleotides XTP (xanthosine triphosphate), dITP (deoxyinosine triphosphate) and ITP. Seems to function as a house-cleaning enzyme that removes non-canonical purine nucleotides from the nucleotide pool, thus preventing their incorporation into DNA/RNA and avoiding chromosomal lesions. The chain is dITP/XTP pyrophosphatase from Gluconobacter oxydans (strain 621H) (Gluconobacter suboxydans).